The chain runs to 301 residues: MTSQDSVDWQDVLPVDERQRIRDLISDATSADGVAPVGDQVLRELGQQRTRHLVALQDGALRGYLNLAPAGDGAPPMAELVVHPDARRRGIGSAMIRTALSVGGPDTRIWAHGDLEPARATAAALGLSAVRELLQMRRSLADLPTAPPVDGVRFATYAGPQDDAEVLRVNNAAFSWHPEQGGWTEADIAERRDEQWFDPDGFFLAFDEDSGRLLGFHWTKVHSATLGEVYVVGVDTAAQGRGLGGALTLIGLHHLADRLLSSGHDADVMLYVEADNTAAVKTYRRLGFEVVNTDVAYAVEG.

N-acetyltransferase domains follow at residues 7–150 (VDWQ…PPVD) and 152–301 (VRFA…AVEG). Asp-39 is a 1D-myo-inositol 2-(L-cysteinylamino)-2-deoxy-alpha-D-glucopyranoside binding site. Acetyl-CoA is bound by residues 80 to 82 (LVV) and 88 to 93 (RRGIGS). Residues Glu-179, Lys-220, and Glu-228 each coordinate 1D-myo-inositol 2-(L-cysteinylamino)-2-deoxy-alpha-D-glucopyranoside. Residue 232–234 (VGV) participates in acetyl-CoA binding. Tyr-271 provides a ligand contact to 1D-myo-inositol 2-(L-cysteinylamino)-2-deoxy-alpha-D-glucopyranoside. 276–281 (NTAAVK) contacts acetyl-CoA.

Belongs to the acetyltransferase family. MshD subfamily. Monomer.

It catalyses the reaction 1D-myo-inositol 2-(L-cysteinylamino)-2-deoxy-alpha-D-glucopyranoside + acetyl-CoA = mycothiol + CoA + H(+). Catalyzes the transfer of acetyl from acetyl-CoA to desacetylmycothiol (Cys-GlcN-Ins) to form mycothiol. In Mycolicibacterium vanbaalenii (strain DSM 7251 / JCM 13017 / BCRC 16820 / KCTC 9966 / NRRL B-24157 / PYR-1) (Mycobacterium vanbaalenii), this protein is Mycothiol acetyltransferase.